The sequence spans 338 residues: tRNA N6-adenosine threonylcarbamoyltransferase (338 aa).

Fe cation contacts are provided by His111 and His115. Substrate contacts are provided by residues 134–138 (LVSGG), Asp167, Gly180, and Asn272. Position 300 (Asp300) interacts with Fe cation.

This sequence belongs to the KAE1 / TsaD family. Requires Fe(2+) as cofactor.

It is found in the cytoplasm. The enzyme catalyses L-threonylcarbamoyladenylate + adenosine(37) in tRNA = N(6)-L-threonylcarbamoyladenosine(37) in tRNA + AMP + H(+). Its function is as follows. Required for the formation of a threonylcarbamoyl group on adenosine at position 37 (t(6)A37) in tRNAs that read codons beginning with adenine. Is involved in the transfer of the threonylcarbamoyl moiety of threonylcarbamoyl-AMP (TC-AMP) to the N6 group of A37, together with TsaE and TsaB. TsaD likely plays a direct catalytic role in this reaction. The sequence is that of tRNA N6-adenosine threonylcarbamoyltransferase from Shewanella oneidensis (strain ATCC 700550 / JCM 31522 / CIP 106686 / LMG 19005 / NCIMB 14063 / MR-1).